The chain runs to 845 residues: G-type lectin S-receptor-like serine/threonine-protein kinase At1g11410 (845 aa).

Residues 1 to 21 (MKFFFIFFIFLFSFLIQSCYS) form the signal peptide. The region spanning 22–147 (DNTILRSQSL…VTGKSFWESF (126 aa)) is the Bulb-type lectin domain. Topologically, residues 22–441 (DNTILRSQSL…NGNGASGKKR (420 aa)) are extracellular. N-linked (GlcNAc...) asparagine glycans are attached at residues Asn-82, Asn-103, Asn-185, Asn-231, and Asn-259. Residues 283–321 (PEDKCDIYNHCGFNGYCDSTSTEKFECSCLPGYEPKTPR) enclose the EGF-like domain. Disulfide bonds link Cys-287–Cys-299 and Cys-293–Cys-309. The 84-residue stretch at 341-424 (CNGKEGFAKL…SGQDFYLRVD (84 aa)) folds into the PAN domain. 3 N-linked (GlcNAc...) asparagine glycosylation sites follow: Asn-357, Asn-366, and Asn-379. Disulfide bonds link Cys-372–Cys-399 and Cys-376–Cys-382. The helical transmembrane segment at 442-462 (LVLILISLIAVVMLLLISFHC) threads the bilayer. Topologically, residues 463 to 845 (YLRKRRQRTQ…DVTLTDVQGR (383 aa)) are cytoplasmic. Positions 523–808 (FAFQNKLGAG…DLPSPKHPAF (286 aa)) constitute a Protein kinase domain. Residues 529–537 (LGAGGFGPV) and Lys-551 each bind ATP. Residues 612–629 (EQRAELDWPKRMGIIRGI) are caM-binding. Asp-648 (proton acceptor) is an active-site residue. Residues 803-845 (PKHPAFTAGRRRNTKTGGSSDNWPSGETSSTINDVTLTDVQGR) form a disordered region. Polar residues predominate over residues 817–845 (KTGGSSDNWPSGETSSTINDVTLTDVQGR).

Belongs to the protein kinase superfamily. Ser/Thr protein kinase family.

Its subcellular location is the cell membrane. It catalyses the reaction L-seryl-[protein] + ATP = O-phospho-L-seryl-[protein] + ADP + H(+). It carries out the reaction L-threonyl-[protein] + ATP = O-phospho-L-threonyl-[protein] + ADP + H(+). This Arabidopsis thaliana (Mouse-ear cress) protein is G-type lectin S-receptor-like serine/threonine-protein kinase At1g11410.